Consider the following 391-residue polypeptide: Isocitrate dehydrogenase [NADP] (391 aa).

The D-threo-isocitrate site is built by S102, N104, R108, R118, and R142. Residue D283 coordinates Mg(2+).

Belongs to the isocitrate and isopropylmalate dehydrogenases family. As to quaternary structure, homodimer. Requires Mg(2+) as cofactor. Mn(2+) is required as a cofactor.

It catalyses the reaction D-threo-isocitrate + NADP(+) = 2-oxoglutarate + CO2 + NADPH. In terms of biological role, catalyzes the oxidative decarboxylation of isocitrate to 2-oxoglutarate and carbon dioxide with the concomitant reduction of NADP(+). This Streptococcus salivarius protein is Isocitrate dehydrogenase [NADP] (icd).